A 614-amino-acid polypeptide reads, in one-letter code: Interleukin-18 receptor accessory protein (614 aa).

The first 19 residues, 1–19 (MLCLGWVFLWFVAGEKTTG), serve as a signal peptide directing secretion. Topologically, residues 20-356 (FNHSACATKK…RTIRLRKKEE (337 aa)) are extracellular. A glycan (N-linked (GlcNAc...) asparagine) is linked at Asn-21. A disulfide bridge links Cys-46 with Cys-126. Positions 59 to 78 (ASQLSPTQSPAHKPCSGSQK) are disordered. 2 consecutive Ig-like C2-type domains span residues 148-234 (PQRN…WTVR) and 250-352 (PEIL…IRLR). Asn-151 is a glycosylation site (N-linked (GlcNAc...) asparagine). 3 disulfide bridges follow: Cys-154–Cys-179, Cys-174–Cys-220, and Cys-179–Cys-220. Asn-227 carries an N-linked (GlcNAc...) asparagine glycan. Cys-272 and Cys-336 are oxidised to a cystine. The N-linked (GlcNAc...) asparagine glycan is linked to Asn-344. A helical membrane pass occupies residues 357–377 (VVFVYILLGTALMLVGVLVAA). Residues 378-614 (AFLYWYWIEV…LLLYSDQKRC (237 aa)) lie on the Cytoplasmic side of the membrane. The TIR domain maps to 405–558 (KEFDAFVSYS…RFWTQIRYHM (154 aa)). The active site involves Glu-492.

It belongs to the interleukin-1 receptor family. Forms a ternary complex with IL18 and IL18R1. Within this complex, IL18R1 is involved in ligand-binding and IL18RAP in signaling leading to NF-kappa-B and JNK activation.

The protein resides in the cell membrane. It carries out the reaction NAD(+) + H2O = ADP-D-ribose + nicotinamide + H(+). Functionally, within the IL18 receptor complex, does not mediate IL18-binding, but involved in IL18-dependent signal transduction, leading to NF-kappa-B and JNK activation. May play a role in IL18-mediated IFNG synthesis from T-helper 1 (Th1) cells. The protein is Interleukin-18 receptor accessory protein of Mus musculus (Mouse).